The primary structure comprises 279 residues: Universal stress protein MT2087 (279 aa).

Belongs to the universal stress protein A family.

This Mycobacterium tuberculosis (strain CDC 1551 / Oshkosh) protein is Universal stress protein MT2087.